Reading from the N-terminus, the 354-residue chain is Chorismate synthase (354 aa).

Position 46 (R46) interacts with NADP(+). FMN contacts are provided by residues 123 to 125 (RSS), 239 to 240 (NA), G284, 299 to 303 (KPVAT), and R325.

The protein belongs to the chorismate synthase family. In terms of assembly, homotetramer. It depends on FMNH2 as a cofactor.

It catalyses the reaction 5-O-(1-carboxyvinyl)-3-phosphoshikimate = chorismate + phosphate. It participates in metabolic intermediate biosynthesis; chorismate biosynthesis; chorismate from D-erythrose 4-phosphate and phosphoenolpyruvate: step 7/7. Its function is as follows. Catalyzes the anti-1,4-elimination of the C-3 phosphate and the C-6 proR hydrogen from 5-enolpyruvylshikimate-3-phosphate (EPSP) to yield chorismate, which is the branch point compound that serves as the starting substrate for the three terminal pathways of aromatic amino acid biosynthesis. This reaction introduces a second double bond into the aromatic ring system. This Azobacteroides pseudotrichonymphae genomovar. CFP2 protein is Chorismate synthase.